The chain runs to 1114 residues: Hephaestin-like protein (1114 aa).

An N-terminal signal peptide occupies residues 1–26 (MMDRSNAAFVLTACFIFSQLICHVAA). 6 consecutive Plastocyanin-like domains span residues 27–210 (ITRT…LICR), 218–365 (QQSG…VTKC), 380–562 (KRTY…LLTC), 572–719 (TRKD…VNTC), 730–915 (KTRD…LIIC), and 924–1114 (TEER…LLKA). Residues 27 to 1091 (ITRTYYIAAV…KTTPKPITAA (1065 aa)) are Extracellular-facing. Asn121 carries an N-linked (GlcNAc...) asparagine glycan. Residues His129, His131, His189, and His191 each coordinate Cu cation. Cys183 and Cys209 form a disulfide bridge. N-linked (GlcNAc...) asparagine glycosylation occurs at Asn236. A disulfide bridge connects residues Cys284 and Cys365. Cu cation is bound by residues His303, Cys346, and His351. 3 N-linked (GlcNAc...) asparagine glycosylation sites follow: Asn361, Asn478, and Asn489. Cystine bridges form between Cys536/Cys562 and Cys638/Cys719. The Cu cation site is built by His657, Cys700, His705, and Met710. An N-linked (GlcNAc...) asparagine glycan is attached at Asn831. Cys889 and Cys915 are disulfide-bonded. A glycan (N-linked (GlcNAc...) asparagine) is linked at Asn944. The Cu cation site is built by His1014, His1017, His1019, His1059, Cys1060, His1061, His1065, and Met1070. Residues 1092 to 1112 (SSFVTSSIFIYLSFPVLAMLL) traverse the membrane as a helical segment. The Cytoplasmic segment spans residues 1113 to 1114 (KA).

This sequence belongs to the multicopper oxidase family. It depends on Cu cation as a cofactor. As to expression, component of the acid-insoluble and acid-soluble organic matrix of the aragonitic skeleton (at protein level).

The protein localises to the membrane. In terms of biological role, may function as a ferroxidase and may be involved in copper transport and homeostasis. This Acropora millepora (Staghorn coral) protein is Hephaestin-like protein.